A 426-amino-acid chain; its full sequence is Pannexin-1 (426 aa).

Topologically, residues 1–40 (MAIAHLATEYVFSDFLLKEPTEPKFKGLRLELAVDKMVTC) are cytoplasmic. At cysteine 40 the chain carries S-nitrosocysteine. A helical transmembrane segment spans residues 41-61 (IAVGLPLLLISLAFAQEISIG). The Extracellular segment spans residues 62–106 (TQISCFSPSSFSWRQAAFVDSYCWAAVQQKSSLQSESGNLPLWLH). 2 cysteine pairs are disulfide-bonded: cysteine 66–cysteine 264 and cysteine 84–cysteine 245. A helical transmembrane segment spans residues 107–127 (KFFPYILLLFAILLYLPALFW). The Cytoplasmic segment spans residues 128–216 (RFSAAPHLCS…HLIMKYISCR (89 aa)). Tyrosine 198 bears the Phosphotyrosine mark. Residues 217 to 237 (LVTFVVILLACIYLSYYFSLS) form a helical membrane-spanning segment. Over 238 to 277 (SLSDEFLCSIKSGVLKNDSTIPDRFQCKLIAVGIFQLLSL) the chain is Extracellular. Residue asparagine 254 is glycosylated (N-linked (GlcNAc...) asparagine). The helical transmembrane segment at 278–298 (INLIVYALLIPVVVYTFFIPF) threads the bilayer. Residues 299–426 (RQKTDILKVY…SRQRLLNPSC (128 aa)) are Cytoplasmic-facing. Cysteine 346 is subject to S-nitrosocysteine.

It belongs to the pannexin family. Homoheptameric. S-nitrosylation inhibits channel currents and ATP release. Post-translationally, N-glycosylation may play a role in cell surface targeting. Exists in three glycosylation states: non-glycosylated (GLY0), high-mannose glycosylated (GLY1), and fully mature glycosylated (GLY2). In terms of processing, phosphorylated at Tyr-198 by SRC. Phosphorylation activates ATP release. Constitutively phosphorylated in vascular smooth muscle cells. Cleaved by CASP3 and CASP7 during apoptosis. Cleavage opens the channel for the release of metabolites and induces plasma membrane permeability during apoptosis. In terms of tissue distribution, widely expressed, including in cartilage, skin, spleen and brain.

Its subcellular location is the cell membrane. The protein resides in the endoplasmic reticulum membrane. The catalysed reaction is chloride(in) = chloride(out). The enzyme catalyses iodide(out) = iodide(in). It catalyses the reaction Ca(2+)(in) = Ca(2+)(out). It carries out the reaction ATP(in) = ATP(out). The catalysed reaction is K(+)(in) = K(+)(out). The enzyme catalyses Na(+)(in) = Na(+)(out). It catalyses the reaction nitrate(in) = nitrate(out). It carries out the reaction L-aspartate(out) = L-aspartate(in). The catalysed reaction is L-glutamate(out) = L-glutamate(in). The enzyme catalyses D-gluconate(in) = D-gluconate(out). It catalyses the reaction spermidine(in) = spermidine(out). Ion channel involved in a variety of physiological functions such as blood pressure regulation, apoptotic cell clearance and oogenesis. Forms anion-selective channels with relatively low conductance and an order of permeabilities: nitrate&gt;iodide&gt;chlroride&gt;&gt;aspartate=glutamate=gluconate. Can release ATP upon activation through phosphorylation or cleavage at C-terminus. May play a role as a Ca(2+)-leak channel to regulate ER Ca(2+) homeostasis. Its function is as follows. During apoptosis and after cleavage by caspases of the C-terminal tail, acts as a plasma membrane channel which mediates the regulated release of find-me signals, such as nucleotides ATP and UTP, and selective plasme membrane permeability. The sequence is that of Pannexin-1 from Mus musculus (Mouse).